The chain runs to 293 residues: MAKEILVAYGVDIDAVAGWLGSYGGEDSPDDISRGLFAGEVGIPRLLKLFKKYHLPATWFSPGHSIETFSEQMKMIVDAGHEVGAHGYSHENPIAMTAKQEEDVLLKSVELIKDLTGKAPTGYVAPWWEFSNITNELLLKHGFKYDHSLMHNDFTPYYVRVGDSWSKIDYSLEAKDWMKPLIRGVETDLVEIPANWYLDDLPPMMFIKKSPNSFGFVSPHDIGQMWIDQFDWVYREMDYAVFSMTIHPDVSARPQVLLMHEKIIEHINKHEGVRWVTFNEIADDFLKRNPRKK.

Residues aspartate 14, histidine 86, and histidine 90 each coordinate Zn(2+). In terms of domain architecture, NodB homology spans 29-276; that stretch reads PDDISRGLFA…INKHEGVRWV (248 aa).

Belongs to the polysaccharide deacetylase family. Homotetramer.

The enzyme catalyses Deacetylation of xylans and xylo-oligosaccharides.. Functionally, catalyzes the N-deacetylation of peptidoglycan (PG), an important mechanism that appears to confer lysozyme resistance and to mitigate host immune detection; this likely contributes to pathogen persistence in the host. The exact nature of the residue in PG that is deacetylated has not been determined. Is also able to catalyze the deacetylation of acetylated xylan, and, to a lesser extent, that of chitin and chitosan. Therefore, this enzyme might play a role during infection, considering that xylan-containing carbohydrate structures are among those commonly consumed by humans. This is Peptidoglycan deacetylase (pgdA) from Helicobacter pylori (strain ATCC 700392 / 26695) (Campylobacter pylori).